Here is a 319-residue protein sequence, read N- to C-terminus: Red chlorophyll catabolite reductase, chloroplastic (319 aa).

Residues 1–39 (MAMIFCNTLYSSSSPSYLSPLTSKPSRFSKNLRPRAQFQ) constitute a chloroplast transit peptide. Residues glutamate 154 and 207 to 209 (YVS) each bind red chlorophyll catabolite. Residues 255-286 (LERCVKEEEEKIVVGEEERMELERRDKSFRRK) are a coiled coil. Aspartate 291 is a red chlorophyll catabolite binding site.

As to quaternary structure, homodimer. Interacts with HCAR. Interacts with SGR1, NYC1, NOL, PPH, PAO and the LHCII complex. Part of a SGR1-CCE-LHCII complex, which acts in chlorophyll breakdown. Expressed in all tissues tested, including roots.

It is found in the plastid. The protein resides in the chloroplast stroma. It localises to the chloroplast thylakoid membrane. The enzyme catalyses primary fluorescent chlorophyll catabolite + 2 oxidized [2Fe-2S]-[ferredoxin] = red chlorophyll catabolite + 2 reduced [2Fe-2S]-[ferredoxin] + 3 H(+). Its pathway is porphyrin-containing compound metabolism; chlorophyll degradation. In terms of biological role, catalyzes the key reaction of chlorophyll catabolism, porphyrin macrocycle cleavage of pheophorbide a (pheide a) to a primary fluorescent catabolite (pFCC). Works in a two-step reaction with pheophorbide a oxygenase (PaO) by reducing the C20/C1 double bond of the intermediate, RCC. Belongs to the chlorophyll catabolic enzymes (CCEs). This chain is Red chlorophyll catabolite reductase, chloroplastic, found in Arabidopsis thaliana (Mouse-ear cress).